We begin with the raw amino-acid sequence, 144 residues long: Large ribosomal subunit protein uL15 (144 aa).

Residues 1 to 54 form a disordered region; the sequence is MRLNTLSPAEGSKKAGKRLGRGIGSGLGKTGGRGHKGQKSRSGGGVRRGFEGGQ. The span at 21-31 shows a compositional bias: gly residues; sequence RGIGSGLGKTG.

The protein belongs to the universal ribosomal protein uL15 family. As to quaternary structure, part of the 50S ribosomal subunit.

In terms of biological role, binds to the 23S rRNA. This Salmonella enteritidis PT4 (strain P125109) protein is Large ribosomal subunit protein uL15.